We begin with the raw amino-acid sequence, 388 residues long: Methylthioribose-1-phosphate isomerase (388 aa).

Residue D258 is the Proton donor of the active site.

This sequence belongs to the eIF-2B alpha/beta/delta subunits family. MtnA subfamily.

Its subcellular location is the cytoplasm. The protein localises to the nucleus. The catalysed reaction is 5-(methylsulfanyl)-alpha-D-ribose 1-phosphate = 5-(methylsulfanyl)-D-ribulose 1-phosphate. It functions in the pathway amino-acid biosynthesis; L-methionine biosynthesis via salvage pathway; L-methionine from S-methyl-5-thio-alpha-D-ribose 1-phosphate: step 1/6. Its function is as follows. Catalyzes the interconversion of methylthioribose-1-phosphate (MTR-1-P) into methylthioribulose-1-phosphate (MTRu-1-P). The sequence is that of Methylthioribose-1-phosphate isomerase from Sordaria macrospora (strain ATCC MYA-333 / DSM 997 / K(L3346) / K-hell).